We begin with the raw amino-acid sequence, 157 residues long: NADPH-dependent 7-cyano-7-deazaguanine reductase (157 aa).

Cys55 serves as the catalytic Thioimide intermediate. The Proton donor role is filled by Asp62. Residues Val77 to Ser79 and His96 to Glu97 contribute to the substrate site.

The protein belongs to the GTP cyclohydrolase I family. QueF type 1 subfamily.

It localises to the cytoplasm. It catalyses the reaction 7-aminomethyl-7-carbaguanine + 2 NADP(+) = 7-cyano-7-deazaguanine + 2 NADPH + 3 H(+). It functions in the pathway tRNA modification; tRNA-queuosine biosynthesis. Functionally, catalyzes the NADPH-dependent reduction of 7-cyano-7-deazaguanine (preQ0) to 7-aminomethyl-7-deazaguanine (preQ1). The sequence is that of NADPH-dependent 7-cyano-7-deazaguanine reductase from Neisseria meningitidis serogroup C / serotype 2a (strain ATCC 700532 / DSM 15464 / FAM18).